A 329-amino-acid polypeptide reads, in one-letter code: Glucokinase (329 aa).

13 to 18 (GDIGGT) lines the ATP pocket.

The protein belongs to the bacterial glucokinase family.

The protein resides in the cytoplasm. The catalysed reaction is D-glucose + ATP = D-glucose 6-phosphate + ADP + H(+). In Caulobacter sp. (strain K31), this protein is Glucokinase.